The sequence spans 57 residues: Small ribosomal subunit protein bS21 (57 aa).

This sequence belongs to the bacterial ribosomal protein bS21 family.

This is Small ribosomal subunit protein bS21 from Lysinibacillus sphaericus (strain C3-41).